The chain runs to 537 residues: Phosphoenolpyruvate carboxykinase (ATP) (537 aa).

Substrate contacts are provided by R61, Y195, and K201. Residues K201, H220, and 236–244 contribute to the ATP site; that span reads GLSGTGKTT. Mn(2+)-binding residues include K201 and H220. D257 is a binding site for Mn(2+). ATP-binding residues include E285, R323, and T448. Position 323 (R323) interacts with substrate.

Belongs to the phosphoenolpyruvate carboxykinase (ATP) family. The cofactor is Mn(2+).

It is found in the cytoplasm. The enzyme catalyses oxaloacetate + ATP = phosphoenolpyruvate + ADP + CO2. Its pathway is carbohydrate biosynthesis; gluconeogenesis. Functionally, involved in the gluconeogenesis. Catalyzes the conversion of oxaloacetate (OAA) to phosphoenolpyruvate (PEP) through direct phosphoryl transfer between the nucleoside triphosphate and OAA. The sequence is that of Phosphoenolpyruvate carboxykinase (ATP) from Rhodopseudomonas palustris (strain BisA53).